The following is a 90-amino-acid chain: MINNIIRNQVVTHFADHACMAQATVSIPELDKLATNLQLADTNKDIFGQDRSKLKGIEASRYFSCDNCGRKIAGGRFAQHINKCLDRKRK.

An SGF11-type zinc finger spans residues 63–84 (FSCDNCGRKIAGGRFAQHINKC).

Belongs to the SGF11 family. Component of the 1.8 MDa SAGA transcription coactivator-HAT complex. SAGA is built of 5 distinct domains with specialized functions. Within the SAGA complex, SUS1, SGF11, SGF73 and UBP8 form an additional subcomplex of SAGA called the DUB module (deubiquitination module). Interacts directly with SGF73, SUS1 and UBP8.

It is found in the nucleus. Functions as a component of the transcription regulatory histone acetylation (HAT) complex SAGA. At the promoters, SAGA is required for recruitment of the basal transcription machinery. It influences RNA polymerase II transcriptional activity through different activities such as TBP interaction and promoter selectivity, interaction with transcription activators, and chromatin modification through histone acetylation and deubiquitination. SAGA acetylates nucleosomal histone H3 to some extent (to form H3K9ac, H3K14ac, H3K18ac and H3K23ac). SAGA interacts with DNA via upstream activating sequences (UASs). Involved in transcriptional regulation of a subset of SAGA-regulated genes. Within the SAGA complex, participates in a subcomplex, that specifically deubiquitinates histones H2B. In Lodderomyces elongisporus (strain ATCC 11503 / CBS 2605 / JCM 1781 / NBRC 1676 / NRRL YB-4239) (Yeast), this protein is SAGA-associated factor 11.